The following is a 453-amino-acid chain: Bifunctional protein GlmU (453 aa).

The pyrophosphorylase stretch occupies residues 1-226 (MKFSAVILAA…AIEVEGVNDR (226 aa)). Residues 8-11 (LAAG), Lys-22, Gln-73, 78-79 (GT), 100-102 (YGD), Gly-137, Glu-151, Asn-166, and Asn-224 each bind UDP-N-acetyl-alpha-D-glucosamine. Asp-102 lines the Mg(2+) pocket. A Mg(2+)-binding site is contributed by Asn-224. The interval 227–247 (AQLARLERAFQSMQAQKLLEQ) is linker. Residues 248 to 453 (GVMLRDPARF…TGWQRPVKQK (206 aa)) form an N-acetyltransferase region. Positions 330 and 348 each coordinate UDP-N-acetyl-alpha-D-glucosamine. Catalysis depends on His-360, which acts as the Proton acceptor. Positions 363 and 374 each coordinate UDP-N-acetyl-alpha-D-glucosamine. Acetyl-CoA-binding positions include Ala-377, 383–384 (NY), Ser-402, Ala-420, and Arg-437.

This sequence in the N-terminal section; belongs to the N-acetylglucosamine-1-phosphate uridyltransferase family. The protein in the C-terminal section; belongs to the transferase hexapeptide repeat family. As to quaternary structure, homotrimer. Requires Mg(2+) as cofactor.

It localises to the cytoplasm. It catalyses the reaction alpha-D-glucosamine 1-phosphate + acetyl-CoA = N-acetyl-alpha-D-glucosamine 1-phosphate + CoA + H(+). The enzyme catalyses N-acetyl-alpha-D-glucosamine 1-phosphate + UTP + H(+) = UDP-N-acetyl-alpha-D-glucosamine + diphosphate. The protein operates within nucleotide-sugar biosynthesis; UDP-N-acetyl-alpha-D-glucosamine biosynthesis; N-acetyl-alpha-D-glucosamine 1-phosphate from alpha-D-glucosamine 6-phosphate (route II): step 2/2. It functions in the pathway nucleotide-sugar biosynthesis; UDP-N-acetyl-alpha-D-glucosamine biosynthesis; UDP-N-acetyl-alpha-D-glucosamine from N-acetyl-alpha-D-glucosamine 1-phosphate: step 1/1. Its pathway is bacterial outer membrane biogenesis; LPS lipid A biosynthesis. Its function is as follows. Catalyzes the last two sequential reactions in the de novo biosynthetic pathway for UDP-N-acetylglucosamine (UDP-GlcNAc). The C-terminal domain catalyzes the transfer of acetyl group from acetyl coenzyme A to glucosamine-1-phosphate (GlcN-1-P) to produce N-acetylglucosamine-1-phosphate (GlcNAc-1-P), which is converted into UDP-GlcNAc by the transfer of uridine 5-monophosphate (from uridine 5-triphosphate), a reaction catalyzed by the N-terminal domain. The chain is Bifunctional protein GlmU from Vibrio campbellii (strain ATCC BAA-1116).